Here is an 868-residue protein sequence, read N- to C-terminus: DNA mismatch repair protein MutS (868 aa).

G620–S627 is a binding site for ATP.

This sequence belongs to the DNA mismatch repair MutS family.

Functionally, this protein is involved in the repair of mismatches in DNA. It is possible that it carries out the mismatch recognition step. This protein has a weak ATPase activity. The protein is DNA mismatch repair protein MutS of Xylella fastidiosa (strain Temecula1 / ATCC 700964).